A 70-amino-acid chain; its full sequence is Small ribosomal subunit protein bS21 (70 aa).

This sequence belongs to the bacterial ribosomal protein bS21 family.

This Delftia acidovorans (strain DSM 14801 / SPH-1) protein is Small ribosomal subunit protein bS21.